Here is a 331-residue protein sequence, read N- to C-terminus: Glycerophosphodiester phosphodiesterase 1 (331 aa).

Topologically, residues 1-3 (MWL) are cytoplasmic. A helical transmembrane segment spans residues 4 to 24 (WEDQGGLLGPFSFVLVLLLVV). At 25–248 (TRSPFNACVL…PRYSVFWKQS (224 aa)) the chain is on the lumenal side. A GP-PDE domain is found at 65–331 (VSAIAHRGGS…SMLEDCAPHF (267 aa)). Residues E97 and D99 each coordinate Mg(2+). The N-linked (GlcNAc...) asparagine glycan is linked to N168. D174 is a binding site for Mg(2+). A helical membrane pass occupies residues 249–269 (VFVVLDILLDWSMHNVLWYLC). Topologically, residues 270-331 (GISAFLMQKD…SMLEDCAPHF (62 aa)) are cytoplasmic.

It belongs to the glycerophosphoryl diester phosphodiesterase family. As to quaternary structure, interacts with PRAF2. Interacts with RGS16. Requires Mg(2+) as cofactor. In terms of processing, N-glycosylated. Widely expressed. Highly expressed in the brain and spinal cord, followed by kidney, liver, and testis. In contrast, little or no expression is detected in the heart or spleen.

Its subcellular location is the cell membrane. The protein resides in the cytoplasmic vesicle membrane. It catalyses the reaction sn-glycero-3-phospho-1D-myo-inositol + H2O = myo-inositol + sn-glycerol 3-phosphate + H(+). The catalysed reaction is 1-O-(1Z-octadecenyl)-sn-glycero-3-phospho-(N-5Z,8Z,11Z,14Z-eicosatetraenoyl)-ethanolamine + H2O = 1-O-(1Z-octadecenyl)-sn-glycero-3-phosphate + N-(5Z,8Z,11Z,14Z-eicosatetraenoyl)-ethanolamine + H(+). The enzyme catalyses 1-O-(1Z-octadecenyl)-sn-glycero-3-phospho-(N-9Z-octadecenoyl)-ethanolamine + H2O = 1-O-(1Z-octadecenyl)-sn-glycero-3-phosphate + N-(9Z-octadecenoyl) ethanolamine + H(+). It carries out the reaction 1-O-(1Z-octadecenyl)-sn-glycero-3-phospho-N-hexadecanoyl-ethanolamine + H2O = 1-O-(1Z-octadecenyl)-sn-glycero-3-phosphate + N-hexadecanoylethanolamine + H(+). It catalyses the reaction N-(4Z,7Z,10Z,13Z,16Z,19Z)-docosahexaenoyl-sn-glycero-3-phosphoethanolamine + H2O = N-(4Z,7Z,10Z,13Z,16Z,19Z)-docosahexaenoyl ethanolamine + sn-glycerol 3-phosphate + H(+). The catalysed reaction is N-eicosanoyl-sn-glycero-3-phosphoethanolamine + H2O = N-eicosanoyl ethanolamine + sn-glycerol 3-phosphate + H(+). The enzyme catalyses N-hexadecanoyl-sn-glycero-3-phosphoethanolamine + H2O = N-hexadecanoylethanolamine + sn-glycerol 3-phosphate + H(+). It carries out the reaction N-(9Z-octadecenoyl)-sn-glycero-3-phosphoethanolamine + H2O = N-(9Z-octadecenoyl) ethanolamine + sn-glycerol 3-phosphate + H(+). It catalyses the reaction N-(5Z,8Z,11Z,14Z-eicosatetraenoyl)-sn-glycero-3-phosphoethanolamine + H2O = N-(5Z,8Z,11Z,14Z-eicosatetraenoyl)-ethanolamine + sn-glycerol 3-phosphate + H(+). Its activity is regulated as follows. Inhibited by EDTA, calcium chloride, and zinc chloride. Enhanced by magnesium chloride. Glycerophosphodiester phosphodiesterase activity can be modulated by G-protein signaling pathways. Hydrolyzes the phosphodiester bond of glycerophosphodiesters such as glycerophosphoinositol (GroPIns) and glycerophosphoethanolamine (GroPEth), to yield a glycerol phosphate and an alcohol. Hydrolyzes glycerophospho-N-acylethanolamines to N-acylethanolamines in the brain and participates in bioactive N-acylethanolamine biosynthesis such as anandamide (an endocannabinoid), N-palmitoylethanolamine (an anti-inflammatory), and N-oleoylethanolamine (an anorexic). In addition, has a lysophospholipase D activity by hydrolyzing N-acyl-lysoplasmenylethanolamine (N-acyl-lysoPlsEt) to N-acylethanolamine. However lysophospholipase D activity is lower than glycerophosphodiester phosphodiesterase activity. Has little or no activity towards glycerophosphocholine. In Mus musculus (Mouse), this protein is Glycerophosphodiester phosphodiesterase 1.